Consider the following 218-residue polypeptide: Protein GrpE (218 aa).

Positions 1-10 are enriched in polar residues; sequence MSGEASTPAQ. 2 disordered regions span residues 1–44 and 198–218; these read MSGE…DPAE and SMGPGPSADAEGAASAEAEDS. A compositionally biased stretch (low complexity) spans 200–218; sequence GPGPSADAEGAASAEAEDS.

This sequence belongs to the GrpE family. In terms of assembly, homodimer.

The protein resides in the cytoplasm. In terms of biological role, participates actively in the response to hyperosmotic and heat shock by preventing the aggregation of stress-denatured proteins, in association with DnaK and GrpE. It is the nucleotide exchange factor for DnaK and may function as a thermosensor. Unfolded proteins bind initially to DnaJ; upon interaction with the DnaJ-bound protein, DnaK hydrolyzes its bound ATP, resulting in the formation of a stable complex. GrpE releases ADP from DnaK; ATP binding to DnaK triggers the release of the substrate protein, thus completing the reaction cycle. Several rounds of ATP-dependent interactions between DnaJ, DnaK and GrpE are required for fully efficient folding. This is Protein GrpE from Parasynechococcus marenigrum (strain WH8102).